A 143-amino-acid polypeptide reads, in one-letter code: Large ribosomal subunit protein uL11 (143 aa).

Belongs to the universal ribosomal protein uL11 family. As to quaternary structure, part of the ribosomal stalk of the 50S ribosomal subunit. Interacts with L10 and the large rRNA to form the base of the stalk. L10 forms an elongated spine to which L12 dimers bind in a sequential fashion forming a multimeric L10(L12)X complex. Post-translationally, one or more lysine residues are methylated.

Forms part of the ribosomal stalk which helps the ribosome interact with GTP-bound translation factors. The protein is Large ribosomal subunit protein uL11 of Herminiimonas arsenicoxydans.